We begin with the raw amino-acid sequence, 361 residues long: Trehalose 6-phosphate phosphatase RA3 (361 aa).

The protein belongs to the trehalose phosphatase family. The cofactor is a divalent metal cation. In terms of tissue distribution, expressed in axillary inflorescence meristems.

It catalyses the reaction alpha,alpha-trehalose 6-phosphate + H2O = alpha,alpha-trehalose + phosphate. It participates in glycan biosynthesis; trehalose biosynthesis. In terms of biological role, removes the phosphate from trehalose 6-phosphate to produce free trehalose. Is specific for trehalose 6-phosphate. Does not possess activity toward glucose, sucrose or fructose 6-phosphates. Regulates inflorescence branching. Required to establish the correct identity and determinacy of axillary meristems in both male and female inflorescences. May act through a sugar signal that moves into axillary meristems. Acts upstream of RA1. May have a transcriptional regulatory function. This is Trehalose 6-phosphate phosphatase RA3 from Zea mays (Maize).